The sequence spans 326 residues: N-acetyl-gamma-glutamyl-phosphate reductase (326 aa).

Cys-155 is an active-site residue.

It belongs to the NAGSA dehydrogenase family. Type 1 subfamily.

Its subcellular location is the cytoplasm. It carries out the reaction N-acetyl-L-glutamate 5-semialdehyde + phosphate + NADP(+) = N-acetyl-L-glutamyl 5-phosphate + NADPH + H(+). Its pathway is amino-acid biosynthesis; L-arginine biosynthesis; N(2)-acetyl-L-ornithine from L-glutamate: step 3/4. In terms of biological role, catalyzes the NADPH-dependent reduction of N-acetyl-5-glutamyl phosphate to yield N-acetyl-L-glutamate 5-semialdehyde. This is N-acetyl-gamma-glutamyl-phosphate reductase from Shewanella baltica (strain OS155 / ATCC BAA-1091).